The sequence spans 272 residues: Undecaprenyl-diphosphatase (272 aa).

A run of 8 helical transmembrane segments spans residues 5-25 (YSLFVAFILGVVEGLTEFLPV), 45-65 (AKTFEVIIQLGSILAVVVVFW), 88-108 (HLTLGHILLAMIPAVILGLAF), 114-134 (ALFDPKSVMYALVAGGVLLLA), 153-172 (YRQAFAIGCFQCLALWPGFS), 189-209 (YAASEFSFILAVPMMIGASGL), 221-241 (GDLPMFAVGFITAFIVALIAI), and 251-271 (ISFVPFAIYRFIVAAVVYWVF).

This sequence belongs to the UppP family.

The protein resides in the cell inner membrane. The enzyme catalyses di-trans,octa-cis-undecaprenyl diphosphate + H2O = di-trans,octa-cis-undecaprenyl phosphate + phosphate + H(+). In terms of biological role, catalyzes the dephosphorylation of undecaprenyl diphosphate (UPP). Confers resistance to bacitracin. The chain is Undecaprenyl-diphosphatase from Yersinia pseudotuberculosis serotype IB (strain PB1/+).